Here is a 613-residue protein sequence, read N- to C-terminus: Threonine--tRNA ligase (613 aa).

Positions 1–147 (MRLLLIHARS…TITPQESAPQ (147 aa)) are editing domain. Catalytic regions lie at residues 199-495 (PRYI…PALP) and 200-495 (RYID…PALP). Zn(2+) contacts are provided by Cys-292, His-343, and His-464.

Belongs to the class-II aminoacyl-tRNA synthetase family. In terms of assembly, homodimer. It depends on Zn(2+) as a cofactor.

Its subcellular location is the cytoplasm. It catalyses the reaction tRNA(Thr) + L-threonine + ATP = L-threonyl-tRNA(Thr) + AMP + diphosphate + H(+). In terms of biological role, catalyzes the attachment of threonine to tRNA(Thr) in a two-step reaction: L-threonine is first activated by ATP to form Thr-AMP and then transferred to the acceptor end of tRNA(Thr). Also edits incorrectly charged L-seryl-tRNA(Thr). The chain is Threonine--tRNA ligase from Caldivirga maquilingensis (strain ATCC 700844 / DSM 13496 / JCM 10307 / IC-167).